The following is a 333-amino-acid chain: Fructose-1,6-bisphosphatase class 1 (333 aa).

The Mg(2+) site is built by E90, D113, L115, and D116. Substrate-binding positions include 116 to 119 (DGSS), N209, Y242, and K272. E278 is a Mg(2+) binding site.

This sequence belongs to the FBPase class 1 family. In terms of assembly, homotetramer. Requires Mg(2+) as cofactor.

The protein resides in the cytoplasm. The catalysed reaction is beta-D-fructose 1,6-bisphosphate + H2O = beta-D-fructose 6-phosphate + phosphate. It functions in the pathway carbohydrate biosynthesis; gluconeogenesis. The sequence is that of Fructose-1,6-bisphosphatase class 1 from Pasteurella multocida (strain Pm70).